The chain runs to 218 residues: Mitochondrial import inner membrane translocase subunit TIM17-1 (218 aa).

The next 4 membrane-spanning stretches (helical) occupy residues 19 to 36, 66 to 82, 89 to 105, and 116 to 133; these read VGGA…YHLI, FSVW…ALVY, PWNS…FLSL, and ALVG…GIML.

The protein belongs to the Tim17/Tim22/Tim23 family. As to quaternary structure, component of the TIM17:23 complex at least composed of TIM23, TIM17 and TIM50. The complex interacts with the TIM44 component of the PAM complex. As to expression, expressed in flowers, leaves and cotyledons, and at very low levels in roots.

Its subcellular location is the mitochondrion inner membrane. In terms of biological role, essential component of the TIM17:23 complex, a complex that mediates the translocation of transit peptide-containing proteins across the mitochondrial inner membrane. Links the inner and outer membranes. This chain is Mitochondrial import inner membrane translocase subunit TIM17-1 (TIM17-1), found in Arabidopsis thaliana (Mouse-ear cress).